The chain runs to 514 residues: Protein phosphatase 1H (514 aa).

Serine 7 carries the phosphoserine modification. In terms of domain architecture, PPM-type phosphatase spans 77–507; it reads ATGYAEVINA…DDISVYVIPL (431 aa). Residues 109–135 are disordered; it reads AVTSTPNRNSSKRRSSLPNGEGLQLKE. Position 113 is a phosphothreonine (threonine 113). Residues serine 124 and serine 211 each carry the phosphoserine modification. Residue arginine 213 is modified to Omega-N-methylarginine. Serine 221 carries the post-translational modification Phosphoserine. Phosphothreonine is present on threonine 224. Phosphoserine is present on serine 422.

It belongs to the PP2C family.

The protein resides in the nucleus. Its subcellular location is the cytoplasm. It carries out the reaction O-phospho-L-seryl-[protein] + H2O = L-seryl-[protein] + phosphate. It catalyses the reaction O-phospho-L-threonyl-[protein] + H2O = L-threonyl-[protein] + phosphate. Its function is as follows. Dephosphorylates CDKN1B at 'Thr-187', thus removing a signal for proteasomal degradation. The protein is Protein phosphatase 1H (PPM1H) of Homo sapiens (Human).